The chain runs to 577 residues: Proline--tRNA ligase (577 aa).

It belongs to the class-II aminoacyl-tRNA synthetase family. ProS type 1 subfamily. As to quaternary structure, homodimer.

The protein resides in the cytoplasm. The catalysed reaction is tRNA(Pro) + L-proline + ATP = L-prolyl-tRNA(Pro) + AMP + diphosphate. Functionally, catalyzes the attachment of proline to tRNA(Pro) in a two-step reaction: proline is first activated by ATP to form Pro-AMP and then transferred to the acceptor end of tRNA(Pro). As ProRS can inadvertently accommodate and process non-cognate amino acids such as alanine and cysteine, to avoid such errors it has two additional distinct editing activities against alanine. One activity is designated as 'pretransfer' editing and involves the tRNA(Pro)-independent hydrolysis of activated Ala-AMP. The other activity is designated 'posttransfer' editing and involves deacylation of mischarged Ala-tRNA(Pro). The misacylated Cys-tRNA(Pro) is not edited by ProRS. In Limosilactobacillus reuteri (strain DSM 20016) (Lactobacillus reuteri), this protein is Proline--tRNA ligase.